A 319-amino-acid chain; its full sequence is Lambda-crystallin (319 aa).

At A2 the chain carries N-acetylalanine. S3 is modified (phosphoserine). NAD(+) contacts are provided by residues 16–17, D36, E97, and K102; that span reads LV. S111 is modified (phosphoserine).

The protein belongs to the 3-hydroxyacyl-CoA dehydrogenase family. In terms of assembly, homodimer. As to expression, detected in eye lens, kidney, liver, heart, lung, brain and testis.

It localises to the cytoplasm. It carries out the reaction L-gulonate + NAD(+) = 3-dehydro-L-gulonate + NADH + H(+). Its activity is regulated as follows. Inhibited by malonate and by inorganic phosphate. Its function is as follows. Functions as a crystallin in the rabbit eye lens. Has high L-gulonate 3-dehydrogenase activity. It also exhibits low dehydrogenase activity toward L-3-hydroxybutyrate (HBA) and L-threonate. In Oryctolagus cuniculus (Rabbit), this protein is Lambda-crystallin (CRYL1).